Reading from the N-terminus, the 173-residue chain is MSIEVVDESSFAQGRGVDTVEVSHLARYVLDEMRVHPLAELSVLMVDVEAMARLHVQWMDEPGPTDVMSFPMDQLRPGREGRTSEPGLLGDVVVCPQVAAEQAKASGHATADEVLLLVAHGILHLLGYDHAEPDEEREMFTLQRRLVLGFLARIGRPGDPTPTVGHRALPAGD.

H120, H124, and H130 together coordinate Zn(2+).

The protein belongs to the endoribonuclease YbeY family. The cofactor is Zn(2+).

It is found in the cytoplasm. Single strand-specific metallo-endoribonuclease involved in late-stage 70S ribosome quality control and in maturation of the 3' terminus of the 16S rRNA. In Kineococcus radiotolerans (strain ATCC BAA-149 / DSM 14245 / SRS30216), this protein is Endoribonuclease YbeY.